The chain runs to 227 residues: 2-C-methyl-D-erythritol 4-phosphate cytidylyltransferase (227 aa).

It belongs to the IspD/TarI cytidylyltransferase family. IspD subfamily.

The catalysed reaction is 2-C-methyl-D-erythritol 4-phosphate + CTP + H(+) = 4-CDP-2-C-methyl-D-erythritol + diphosphate. The protein operates within isoprenoid biosynthesis; isopentenyl diphosphate biosynthesis via DXP pathway; isopentenyl diphosphate from 1-deoxy-D-xylulose 5-phosphate: step 2/6. Functionally, catalyzes the formation of 4-diphosphocytidyl-2-C-methyl-D-erythritol from CTP and 2-C-methyl-D-erythritol 4-phosphate (MEP). The protein is 2-C-methyl-D-erythritol 4-phosphate cytidylyltransferase of Petrotoga mobilis (strain DSM 10674 / SJ95).